A 220-amino-acid polypeptide reads, in one-letter code: N-(5'-phosphoribosyl)anthranilate isomerase (220 aa).

This sequence belongs to the TrpF family.

The enzyme catalyses N-(5-phospho-beta-D-ribosyl)anthranilate = 1-(2-carboxyphenylamino)-1-deoxy-D-ribulose 5-phosphate. It participates in amino-acid biosynthesis; L-tryptophan biosynthesis; L-tryptophan from chorismate: step 3/5. This chain is N-(5'-phosphoribosyl)anthranilate isomerase, found in Bordetella petrii (strain ATCC BAA-461 / DSM 12804 / CCUG 43448).